A 98-amino-acid chain; its full sequence is ESAT-6-like protein EsxK (98 aa).

This sequence belongs to the WXG100 family. CFP-10 subfamily. Strongly interacts with EsxL to form a heterodimeric complex under reducing conditions.

Its subcellular location is the secreted. The protein is ESAT-6-like protein EsxK of Mycobacterium tuberculosis (strain CDC 1551 / Oshkosh).